The following is a 3410-amino-acid chain: Genome polyprotein (3410 aa).

Topologically, residues 1–103 are cytoplasmic; the sequence is MTKKPGRPGR…DFVHLPKKKS (103 aa). An interaction with host EXOC1 region spans residues 2 to 15; that stretch reads TKKPGRPGRNRAVN. The hydrophobic; homodimerization of capsid protein C stretch occupies residues 38–73; that stretch reads LLDGRGPLRMVLAILAFFRFTALKPTAGLLKRWGMM. The propeptide at 103–119 is ER anchor for the capsid protein C, removed in mature form by serine protease NS3; the sequence is SGVSIIGRMLVFSFTAA. Residues 104–124 traverse the membrane as a helical segment; that stretch reads GVSIIGRMLVFSFTAAVRVTL. The Extracellular portion of the chain corresponds to 125–245; the sequence is ENGMSLMKIQ…ATSYLTKAES (121 aa). The helical transmembrane segment at 246 to 266 threads the bilayer; that stretch reads WALRNPGYALVAAVLGWSLGT. Topologically, residues 267 to 271 are cytoplasmic; the sequence is SNAQK. A helical membrane pass occupies residues 272-286; the sequence is VIFTVMILLIAPAYS. Residues 287 to 739 lie on the Extracellular side of the membrane; it reads IRCVGVENRD…QIFGGMFRTL (453 aa). Cystine bridges form between Cys-289–Cys-316, Cys-346–Cys-402, Cys-346–Cys-407, Cys-360–Cys-391, Cys-378–Cys-402, and Cys-378–Cys-407. Positions 384-397 are fusion peptide; that stretch reads DRGWGNGCGLFGKG. Asn-440 is a glycosylation site (N-linked (GlcNAc...) asparagine; by host). 2 disulfide bridges follow: Cys-476-Cys-574 and Cys-591-Cys-622. Residues 740–760 traverse the membrane as a helical segment; the sequence is FGGMSWFTQIMIGALCCWLGI. The Cytoplasmic portion of the chain corresponds to 761 to 766; that stretch reads NARDRT. A helical transmembrane segment spans residues 767-787; it reads IAVTFLAVGGVLVFLATSVNA. The Extracellular segment spans residues 788–1165; that stretch reads DSGCALDLKR…IALQEVMRKR (378 aa). 8 disulfides stabilise this stretch: Cys-791–Cys-802, Cys-842–Cys-928, Cys-964–Cys-1009, Cys-1066–Cys-1115, Cys-1077–Cys-1098, Cys-1077–Cys-1099, Cys-1098–Cys-1102, and Cys-1099–Cys-1102. Residue Asn-915 is glycosylated (N-linked (GlcNAc...) asparagine; by host). Residues 1166-1186 traverse the membrane as a helical segment; the sequence is ILGRHITWMVIAVFMAMILGG. Residues 1187-1214 lie on the Cytoplasmic side of the membrane; the sequence is LSYRDLGRYLVLVGAAFAERNSGGDLLH. Residues 1215–1235 form a helical membrane-spanning segment; the sequence is LVLVATFKVKPMALLGFVLGG. Residues 1236–1242 lie on the Lumenal side of the membrane; it reads RWCRRQS. The chain crosses the membrane as a helical span at residues 1243–1263; sequence LLLSIGAVLVNFALEFQGGYF. Topologically, residues 1264–1284 are cytoplasmic; that stretch reads ELVDSLALALLFVKAVVQTDT. The chain crosses the membrane as a helical span at residues 1285–1305; that stretch reads TSVSLPLLAALAPAGCYTVLG. Residues 1306–1335 lie on the Lumenal side of the membrane; the sequence is THRFIMLTLVLVTFLGCKKTASVKKAGTAA. A helical membrane pass occupies residues 1336 to 1356; it reads VGVVLGMVGMKTIPMLGMLMV. Over 1357 to 1363 the chain is Cytoplasmic; sequence TSRARRS. The helical transmembrane segment at 1364-1384 threads the bilayer; it reads WPLHEAMAAVGILCALFGALA. Over 1385-1387 the chain is Lumenal; it reads ETE. Residues 1388–1408 form a helical membrane-spanning segment; that stretch reads VDLAGPLAAAGLIVMAYVISG. The Cytoplasmic portion of the chain corresponds to 1409–1464; the sequence is RSNDLSIKKVEDVKWSDEAEVTGESVSYHVSLDVRGDPTLTEDSGPGLEKVLLKVG. The interval 1415–1454 is interacts with and activates NS3 protease; sequence IKKVEDVKWSDEAEVTGESVSYHVSLDVRGDPTLTEDSGP. The helical intramembrane region spans 1465-1485; sequence LMAISGIYPVAIPFALGAWFF. The Cytoplasmic segment spans residues 1486–2158; that stretch reads LEKRCKRAGA…KAALENSPEM (673 aa). A Peptidase S7 domain is found at 1493-1670; sequence AGALWDIPSP…ENVGQEDGAE (178 aa). Catalysis depends on charge relay system; for serine protease NS3 activity residues His-1543, Asp-1567, and Ser-1627. The Helicase ATP-binding domain occupies 1673–1829; the sequence is DNWFRKRELT…PSNSPIIDEE (157 aa). Residues 1677–1680 form an important for RNA-binding region; the sequence is RKRE. Position 1686–1693 (1686–1693) interacts with ATP; it reads LHPGAGKT. The DEAH box signature appears at 1777–1780; that stretch reads DEAH. The Helicase C-terminal domain maps to 1839 to 2006; sequence SGYEWIIEFD…QLYTPEREKT (168 aa). Residue Lys-1881 is modified to N6-acetyllysine; by host. The regulates the ATPase activity of NS3 helicase stretch occupies residues 2153–2157; it reads ENSPE. A helical membrane pass occupies residues 2159–2179; sequence IETFLLCALVCLMTIGLVVVL. Topologically, residues 2180–2185 are lumenal; the sequence is VRGKGP. Residues 2186 to 2205 constitute an intramembrane region (helical); the sequence is GKLAFGMVSIGVMTWLLWSA. A topological domain (lumenal) is located at residue Gly-2206. Residues 2207 to 2227 form a helical membrane-spanning segment; sequence VDPGKIAAAVILVFLLLVVLI. Residues 2228–2242 lie on the Cytoplasmic side of the membrane; that stretch reads PEPEKQRSVQDNQLA. Residues 2243-2257 form a helical membrane-spanning segment; that stretch reads MLMLLIATILGGVAA. Over 2258–2293 the chain is Lumenal; it reads NEMGWLEKTKADLSWVVRGRSSTTTPVVELDMKPAT. The helical intramembrane region spans 2294-2314; that stretch reads AWTLYALATTLLTPLFQHLIV. Over 2315–2336 the chain is Lumenal; the sequence is TKYANISLMAIASQAGTLFSMD. Residues 2337–2357 form a helical membrane-spanning segment; it reads SGIPFSSIELSVPLLALGCWT. Gln-2358 is a topological domain (cytoplasmic). Residues 2359–2379 traverse the membrane as a helical segment; sequence ITPCSLILACVLLSTHYAILL. Residues 2380 to 2420 are Lumenal-facing; it reads PGMQAQAARDAQRRTAAGIMKNAVVDGIVATDIPPLDGAGP. Residues 2421-2441 form a helical membrane-spanning segment; that stretch reads LTEKKLGQLLLFAAAVTGVVI. Residues 2442-3410 lie on the Cytoplasmic side of the membrane; sequence TRSPRSWSEL…EKRVEFRGVL (969 aa). The 266-residue stretch at 2508–2773 folds into the mRNA cap 0-1 NS5-type MT domain; that stretch reads GGGIGETLGE…DVNLSCGTRA (266 aa). Ser-2563 is an S-adenosyl-L-methionine binding site. Ser-2563 is subject to Phosphoserine. The active-site For 2'-O-MTase activity is the Lys-2568. Residues Gly-2593, Trp-2594, Thr-2611, Lys-2612, Asp-2638, and Val-2639 each coordinate S-adenosyl-L-methionine. Asp-2653 serves as the catalytic For 2'-O-MTase activity. Position 2654 (Ile-2654) interacts with S-adenosyl-L-methionine. Catalysis depends on for 2'-O-MTase activity residues Lys-2690 and Glu-2726. Tyr-2728 is a binding site for S-adenosyl-L-methionine. Positions 2947, 2951, 2956, and 2959 each coordinate Zn(2+). A RdRp catalytic domain is found at 3036–3187; sequence GILYADDTAG…AAPDARFGAA (152 aa). Zn(2+)-binding residues include His-3222, Cys-3238, and Cys-3356.

It in the N-terminal section; belongs to the class I-like SAM-binding methyltransferase superfamily. mRNA cap 0-1 NS5-type methyltransferase family. As to quaternary structure, homodimer. Interacts (via N-terminus) with host EXOC1 (via C-terminus); this interaction results in EXOC1 degradation through the proteasome degradation pathway. In terms of assembly, forms heterodimers with envelope protein E in the endoplasmic reticulum and Golgi. Homodimer; in the endoplasmic reticulum and Golgi. Interacts with protein prM. Interacts with non-structural protein 1. As to quaternary structure, homodimer; Homohexamer when secreted. Interacts with envelope protein E. NS1 interacts with NS4B. Interacts with host complement protein CFH; this interaction leads to the degradation of C3. In terms of assembly, interacts (via N-terminus) with serine protease NS3. Forms a heterodimer with serine protease NS3. May form homooligomers. As to quaternary structure, forms a heterodimer with NS2B. Interacts with non-structural protein 2A (via N-terminus). Interacts with NS4B. Interacts with unphosphorylated RNA-directed RNA polymerase NS5; this interaction stimulates RNA-directed RNA polymerase NS5 guanylyltransferase activity. In terms of assembly, interacts with serine protease NS3. Homodimer. Interacts with host STAT2; this interaction inhibits the phosphorylation of the latter, and, when all viral proteins are present (polyprotein), targets STAT2 for degradation. Specific enzymatic cleavages in vivo yield mature proteins. Cleavages in the lumen of endoplasmic reticulum are performed by host signal peptidase, whereas cleavages in the cytoplasmic side are performed by serine protease NS3. Signal cleavage at the 2K-4B site requires a prior NS3 protease-mediated cleavage at the 4A-2K site. In terms of processing, cleaved in post-Golgi vesicles by a host furin, releasing the mature small envelope protein M, and peptide pr. This cleavage is incomplete as up to 30% of viral particles still carry uncleaved prM. Post-translationally, N-glycosylated. N-glycosylated. The excreted form is glycosylated and this is required for efficient secretion of the protein from infected cells. In terms of processing, acetylated by host KAT5. Acetylation modulates NS3 RNA-binding and unwinding activities and plays an important positive role for viral replication. Post-translationally, phosphorylated on serines residues. This phosphorylation may trigger NS5 nuclear localization.

It is found in the virion. It localises to the host nucleus. The protein resides in the host cytoplasm. The protein localises to the host perinuclear region. Its subcellular location is the secreted. It is found in the virion membrane. It localises to the host endoplasmic reticulum membrane. The enzyme catalyses Selective hydrolysis of -Xaa-Xaa-|-Yaa- bonds in which each of the Xaa can be either Arg or Lys and Yaa can be either Ser or Ala.. It catalyses the reaction RNA(n) + a ribonucleoside 5'-triphosphate = RNA(n+1) + diphosphate. The catalysed reaction is a ribonucleoside 5'-triphosphate + H2O = a ribonucleoside 5'-diphosphate + phosphate + H(+). It carries out the reaction ATP + H2O = ADP + phosphate + H(+). The enzyme catalyses a 5'-end (5'-triphosphoguanosine)-ribonucleoside in mRNA + S-adenosyl-L-methionine = a 5'-end (N(7)-methyl 5'-triphosphoguanosine)-ribonucleoside in mRNA + S-adenosyl-L-homocysteine. It catalyses the reaction a 5'-end (N(7)-methyl 5'-triphosphoguanosine)-ribonucleoside in mRNA + S-adenosyl-L-methionine = a 5'-end (N(7)-methyl 5'-triphosphoguanosine)-(2'-O-methyl-ribonucleoside) in mRNA + S-adenosyl-L-homocysteine + H(+). Its function is as follows. Plays a role in virus budding by binding to the cell membrane and gathering the viral RNA into a nucleocapsid that forms the core of a mature virus particle. During virus entry, may induce genome penetration into the host cytoplasm after hemifusion induced by the surface proteins. Can migrate to the cell nucleus where it modulates host functions. Overcomes the anti-viral effects of host EXOC1 by sequestering and degrading the latter through the proteasome degradation pathway. Inhibits RNA silencing by interfering with host Dicer. Functionally, prevents premature fusion activity of envelope proteins in trans-Golgi by binding to envelope protein E at pH6.0. After virion release in extracellular space, gets dissociated from E dimers. In terms of biological role, acts as a chaperone for envelope protein E during intracellular virion assembly by masking and inactivating envelope protein E fusion peptide. prM is the only viral peptide matured by host furin in the trans-Golgi network probably to avoid catastrophic activation of the viral fusion activity in acidic Golgi compartment prior to virion release. prM-E cleavage is inefficient, and many virions are only partially matured. These uncleaved prM would play a role in immune evasion. Its function is as follows. May play a role in virus budding. Exerts cytotoxic effects by activating a mitochondrial apoptotic pathway through M ectodomain. May display a viroporin activity. Binds to host cell surface receptor and mediates fusion between viral and cellular membranes. Envelope protein is synthesized in the endoplasmic reticulum in the form of heterodimer with protein prM. They play a role in virion budding in the ER, and the newly formed immature particle is covered with 60 spikes composed of heterodimer between precursor prM and envelope protein E. The virion is transported to the Golgi apparatus where the low pH causes dissociation of PrM-E heterodimers and formation of E homodimers. prM-E cleavage is inefficient, and many virions are only partially matured. These uncleaved prM would play a role in immune evasion. Functionally, involved in immune evasion, pathogenesis and viral replication. Once cleaved off the polyprotein, is targeted to three destinations: the viral replication cycle, the plasma membrane and the extracellular compartment. Essential for viral replication. Required for formation of the replication complex and recruitment of other non-structural proteins to the ER-derived membrane structures. Excreted as a hexameric lipoparticle that plays a role against host immune response. Antagonizing the complement function. Binds to the host macrophages and dendritic cells. Inhibits signal transduction originating from Toll-like receptor 3 (TLR3). In terms of biological role, component of the viral RNA replication complex that functions in virion assembly and antagonizes the host alpha/beta interferon antiviral response. Its function is as follows. Required cofactor for the serine protease function of NS3. May have membrane-destabilizing activity and form viroporins. Displays three enzymatic activities: serine protease, NTPase and RNA helicase. NS3 serine protease, in association with NS2B, performs its autocleavage and cleaves the polyprotein at dibasic sites in the cytoplasm: C-prM, NS2A-NS2B, NS2B-NS3, NS3-NS4A, NS4A-2K and NS4B-NS5. NS3 RNA helicase binds RNA and unwinds dsRNA in the 3' to 5' direction. Functionally, regulates the ATPase activity of the NS3 helicase activity. NS4A allows NS3 helicase to conserve energy during unwinding. In terms of biological role, functions as a signal peptide for NS4B and is required for the interferon antagonism activity of the latter. Its function is as follows. Induces the formation of ER-derived membrane vesicles where the viral replication takes place. Inhibits interferon (IFN)-induced host STAT1 phosphorylation and nuclear translocation, thereby preventing the establishment of cellular antiviral state by blocking the IFN-alpha/beta pathway. Inhibits STAT2 translocation in the nucleus after IFN-alpha treatment. Replicates the viral (+) and (-) RNA genome, and performs the capping of genomes in the cytoplasm. NS5 methylates viral RNA cap at guanine N-7 and ribose 2'-O positions. Besides its role in RNA genome replication, also prevents the establishment of cellular antiviral state by blocking the interferon-alpha/beta (IFN-alpha/beta) signaling pathway. Inhibits host TYK2 and STAT2 phosphorylation, thereby preventing activation of JAK-STAT signaling pathway. The protein is Genome polyprotein of Kokobera virus (KOKV).